Reading from the N-terminus, the 843-residue chain is Receptor-like serine/threonine-protein kinase SD1-7 (843 aa).

An N-terminal signal peptide occupies residues Met1 to Ser31. Positions Ala32 to Asp151 constitute a Bulb-type lectin domain. Over Ala32 to Lys435 the chain is Extracellular. N-linked (GlcNAc...) asparagine glycans are attached at residues Asn41, Asn92, Asn116, Asn236, and Asn251. Residues Pro286–Gln322 enclose the EGF-like; atypical domain. Intrachain disulfides connect Cys290/Cys302, Cys296/Cys310, Cys372/Cys397, and Cys376/Cys382. The 82-residue stretch at Cys341–Ala422 folds into the PAN domain. Asn381 is a glycosylation site (N-linked (GlcNAc...) asparagine). The helical transmembrane segment at Ile436–Phe456 threads the bilayer. The Cytoplasmic segment spans residues Trp457 to Arg843. In terms of domain architecture, Protein kinase spans Phe519–Phe809. ATP-binding positions include Leu525–Val533 and Lys547. A Phosphoserine modification is found at Ser553. Residues Thr608–Ile625 form a caM-binding region. Asp644 serves as the catalytic Proton acceptor. Ser648 and Ser661 each carry phosphoserine. Residue Thr678 is modified to Phosphothreonine. A Phosphoserine modification is found at Ser820.

This sequence belongs to the protein kinase superfamily. Ser/Thr protein kinase family. In terms of assembly, interacts with PUB9, PUB13, PUB14 and PUB38. In terms of processing, autophosphorylated on serine and threonine residues. As to expression, mostly expressed in leaves, and, to a lower extent, in stems and flower buds.

It localises to the cell membrane. The enzyme catalyses L-seryl-[protein] + ATP = O-phospho-L-seryl-[protein] + ADP + H(+). The catalysed reaction is L-threonyl-[protein] + ATP = O-phospho-L-threonyl-[protein] + ADP + H(+). Involved in the regulation of cellular expansion and differentiation. Mediates subcellular relocalization of PUB9 from nucleus to plasma membrane in a protein-phosphorylation-dependent manner. May be involved in the abscisic acid-mediated signaling pathway, at least during germination. This is Receptor-like serine/threonine-protein kinase SD1-7 (SD17) from Arabidopsis thaliana (Mouse-ear cress).